The primary structure comprises 273 residues: Hemin import ATP-binding protein HmuV (273 aa).

Residues Leu-2–Ala-256 enclose the ABC transporter domain. Position 34-41 (Gly-34–Ser-41) interacts with ATP.

Belongs to the ABC transporter superfamily. Heme (hemin) importer (TC 3.A.1.14.5) family. In terms of assembly, the complex is composed of two ATP-binding proteins (HmuV), two transmembrane proteins (HmuU) and a solute-binding protein (HmuT).

The protein localises to the cell inner membrane. Part of the ABC transporter complex HmuTUV involved in hemin import. Responsible for energy coupling to the transport system. In Burkholderia lata (strain ATCC 17760 / DSM 23089 / LMG 22485 / NCIMB 9086 / R18194 / 383), this protein is Hemin import ATP-binding protein HmuV.